The sequence spans 255 residues: Small ribosomal subunit protein uS2 (255 aa).

Residues 232–255 (ASGRDLGASEEVPVEPALEEASEA) form a disordered region.

The protein belongs to the universal ribosomal protein uS2 family.

The protein is Small ribosomal subunit protein uS2 of Sinorhizobium medicae (strain WSM419) (Ensifer medicae).